A 401-amino-acid polypeptide reads, in one-letter code: Thermophilic serine proteinase (401 aa).

The signal sequence occupies residues 1-24; it reads MKFKAIVSLSLAVSMSLFPFLVEA. A propeptide spanning residues 25-121 is cleaved from the precursor; that stretch reads ASNDGVESPK…AEPNYLFNAA (97 aa). A Ca(2+)-binding site is contributed by D126. The region spanning 133-399 is the Peptidase S8 domain; the sequence is QYGPQNTYTD…YGRINSYNAV (267 aa). D160 (charge relay system) is an active-site residue. The Ca(2+) site is built by P168, D169, D171, D179, D184, and D186. H193 functions as the Charge relay system in the catalytic mechanism. Ca(2+)-binding residues include E204, N207, T209, and I211. C258 and C260 are oxidised to a cystine. Positions 297, 300, and 323 each coordinate Na(+). The active-site Charge relay system is S347.

This sequence belongs to the peptidase S8 family. The cofactor is Ca(2+). Na(+) is required as a cofactor.

It is found in the secreted. This Bacillus sp. (strain AK1) protein is Thermophilic serine proteinase.